A 251-amino-acid polypeptide reads, in one-letter code: CDP-diacylglycerol pyrophosphatase (251 aa).

Residues A4–W24 traverse the membrane as a helical segment.

The protein belongs to the Cdh family.

It localises to the cell inner membrane. The enzyme catalyses a CDP-1,2-diacyl-sn-glycerol + H2O = a 1,2-diacyl-sn-glycero-3-phosphate + CMP + 2 H(+). It participates in phospholipid metabolism; CDP-diacylglycerol degradation; phosphatidate from CDP-diacylglycerol: step 1/1. The protein is CDP-diacylglycerol pyrophosphatase of Escherichia coli (strain SE11).